An 81-amino-acid chain; its full sequence is Short neurotoxin 1 (81 aa).

The signal sequence occupies residues 1-21 (MKTLLLTLVVVTIVCLDLGYT). Cystine bridges form between Cys-24/Cys-43, Cys-38/Cys-60, Cys-62/Cys-73, and Cys-74/Cys-79.

This sequence belongs to the three-finger toxin family. Short-chain subfamily. Type I alpha-neurotoxin sub-subfamily. Expressed by the venom gland.

Its subcellular location is the secreted. Functionally, binds to muscle nicotinic acetylcholine receptor (nAChR) and inhibit acetylcholine from binding to the receptor, thereby impairing neuromuscular transmission. The chain is Short neurotoxin 1 from Tropidechis carinatus (Australian rough-scaled snake).